Here is a 289-residue protein sequence, read N- to C-terminus: Early E4 34 kDa protein (289 aa).

Belongs to the adenoviridae E4 30 to 34 kDa protein family. In terms of assembly, interacts with E1B-55k.

The protein localises to the host nucleus. It is found in the host cytoplasm. Functionally, plays a major role to prevent cellular inhibition of viral genome replication by nuclear bodies. Assembles an SCF-like E3 ubiquitin ligase complex based on the cellular proteins ELOB, ELOC, CUL5 and RBX1, in cooperation with viral E1B-55K. This viral RING-type ligase ubiquitinates cellular substrates prior to proteasomal degradation: p53/TP53, LIG4, MRE11-RAD50-NBS1 (MRN) complex, ITGA3, DAXX and BLM. The sequence is that of Early E4 34 kDa protein from Human adenovirus F serotype 40 (HAdV-40).